The sequence spans 294 residues: Nucleotide-binding protein LCA_0526 (294 aa).

12–19 provides a ligand contact to ATP; the sequence is GMSGAGKT. 62–65 serves as a coordination point for GTP; sequence DLRS.

Belongs to the RapZ-like family.

Displays ATPase and GTPase activities. In Latilactobacillus sakei subsp. sakei (strain 23K) (Lactobacillus sakei subsp. sakei), this protein is Nucleotide-binding protein LCA_0526.